Consider the following 439-residue polypeptide: MNHKLFCVHFLLLILSVCYIQGQDAGGEPAPAEGVAPAPAEGGAPAPAPAEGEAPAPAEGGAPAPAPAEGAEPAPADGGAPAPAPAEGGAPAPAPAEGGAPAPAPAEGGAPAPAEGGAPAPAPAEGEAPAPAPAEGEAPAPAPAEGEAPAPAEGEAPAPAPAEVEAPAPAPAEGEAPAPAPAEGEAPAPAPAEGEAPAPAPAEGEAPAPAPAPAEGEAPAPAPAEGEAPAPAPAEGEAPAPAPAEGEAPAPAPAEGEAPAPAPAEGEAPAPAPAEGEAPAPAPAEGEAPAPAEGEAPAPAPAEGEAPAPAPAEGGAPSPAEGGAPAAAPAEGGAPAPAPAPVEVGPKTEDCKGDPFKRTDCGYPGITEGQCKAKGCCFDSSIVGVKWCFFPRTARAQCLFSPGDREDCGYSSITPMECMKRGCCFDASITGVKWCFHQK.

Residues 1–22 (MNHKLFCVHFLLLILSVCYIQG) form the signal peptide. Residues 25–351 (AGGEPAPAEG…VEVGPKTEDC (327 aa)) are disordered. 5 repeat units span residues 26 to 33 (GGEPAPAE), 34 to 41 (GVAPAPAE), 42 to 51 (GGAPAPAPAE), 52 to 59 (GEAPAPAE), and 60 to 69 (GGAPAPAPAE). The 33 X approximate repeats of G-G(0,1)-[EV](0,1)-A-P-[A-P](1,3)-A-E stretch occupies residues 26-343 (GGEPAPAEGV…APAPAPAPVE (318 aa)). A compositionally biased stretch (low complexity) spans 26–345 (GGEPAPAEGV…APAPAPVEVG (320 aa)). The 6; approximate repeat unit spans residues 70–77 (GAEPAPAD). Repeat copies occupy residues 78–87 (GGAPAPAPAE), 88–97 (GGAPAPAPAE), 98–107 (GGAPAPAPAE), 108–115 (GGAPAPAE), 116–125 (GGAPAPAPAE), 126–135 (GEAPAPAPAE), 136–145 (GEAPAPAPAE), 146–153 (GEAPAPAE), and 154–163 (GEAPAPAPAE). A 16; approximate repeat occupies 164–173 (VEAPAPAPAE). 14 tandem repeats follow at residues 174–183 (GEAPAPAPAE), 184–193 (GEAPAPAPAE), 194–203 (GEAPAPAPAE), 204–215 (GEAPAPAPAPAE), 216–225 (GEAPAPAPAE), 226–235 (GEAPAPAPAE), 236–245 (GEAPAPAPAE), 246–255 (GEAPAPAPAE), 256–265 (GEAPAPAPAE), 266–275 (GEAPAPAPAE), 276–285 (GEAPAPAPAE), 286–293 (GEAPAPAE), 294–303 (GEAPAPAPAE), and 304–313 (GEAPAPAPAE). The stretch at 314-321 (GGAPSPAE) is one 31; approximate repeat. One copy of the 32; approximate repeat lies at 322–331 (GGAPAAAPAE). The stretch at 332–343 (GGAPAPAPAPVE) is one 33; approximate repeat. 2 consecutive P-type domains span residues 349–392 (EDCK…FFPR) and 396–439 (AQCL…FHQK). Intrachain disulfides connect C351/C377, C361/C376, C371/C388, C398/C424, C408/C423, and C418/C435.

In terms of tissue distribution, skin.

The protein resides in the secreted. Its function is as follows. May act as a growth factor in the germinal layer of the epidermis. May also be involved in growth of regenerating glands and in protection of the skin from the external environment. In Xenopus laevis (African clawed frog), this protein is Skin secretory protein xP2 (p2).